Consider the following 266-residue polypeptide: Probable septum site-determining protein MinC (266 aa).

Positions 1–21 (MSEAESTPVEEPVVESTEGSE) are enriched in low complexity. Residues 1–28 (MSEAESTPVEEPVVESTEGSEAIPEVEQ) are disordered.

It belongs to the MinC family. In terms of assembly, interacts with MinD and FtsZ.

In terms of biological role, cell division inhibitor that blocks the formation of polar Z ring septums. Rapidly oscillates between the poles of the cell to destabilize FtsZ filaments that have formed before they mature into polar Z rings. Prevents FtsZ polymerization. This is Probable septum site-determining protein MinC from Thermosynechococcus vestitus (strain NIES-2133 / IAM M-273 / BP-1).